The sequence spans 32 residues: VFCRSNGQQCTSDGQCCYGKCMTAFMGKICMR.

3 disulfides stabilise this stretch: C3–C17, C10–C21, and C16–C30.

In terms of tissue distribution, expressed by the venom gland.

It localises to the secreted. Acts as a neurotoxin. The polypeptide is U13-ctenitoxin-Pn1a (Phoneutria nigriventer (Brazilian armed spider)).